Reading from the N-terminus, the 158-residue chain is Pycsar effector protein SaPycTM (158 aa).

A run of 3 helical transmembrane segments spans residues phenylalanine 20 to phenylalanine 40, isoleucine 53 to valine 73, and valine 136 to isoleucine 156.

It localises to the cell membrane. Pycsar (pyrimidine cyclase system for antiphage resistance) provides immunity against bacteriophage. The pyrimidine cyclase (PycC) synthesizes cyclic nucleotides in response to infection; these serve as specific second messenger signals. The signals activate the adjacent effector, leading to bacterial cell death and abortive phage infection. A clade E Pycsar system. Its function is as follows. The effector gene of a two-gene Pycsar system. Expression of this and adjacent SaPycC cytidylate cyclase (AC P0DV38) probably confers resistance to bacteriophage. The genes are probably only expressed in response to bacteriophage infection. Probably only responds to cCMP (produced by its cognate NTP cyclase), acts by impairing membrane integrity. The sequence is that of Pycsar effector protein SaPycTM from Staphylococcus aureus.